We begin with the raw amino-acid sequence, 227 residues long: Probable septum site-determining protein MinC (227 aa).

It belongs to the MinC family. Interacts with MinD and FtsZ.

In terms of biological role, cell division inhibitor that blocks the formation of polar Z ring septums. Rapidly oscillates between the poles of the cell to destabilize FtsZ filaments that have formed before they mature into polar Z rings. Prevents FtsZ polymerization. The sequence is that of Probable septum site-determining protein MinC from Acetivibrio thermocellus (strain ATCC 27405 / DSM 1237 / JCM 9322 / NBRC 103400 / NCIMB 10682 / NRRL B-4536 / VPI 7372) (Clostridium thermocellum).